We begin with the raw amino-acid sequence, 103 residues long: Small ribosomal subunit protein uS10 (103 aa).

Belongs to the universal ribosomal protein uS10 family. As to quaternary structure, part of the 30S ribosomal subunit.

In terms of biological role, involved in the binding of tRNA to the ribosomes. This is Small ribosomal subunit protein uS10 from Idiomarina loihiensis (strain ATCC BAA-735 / DSM 15497 / L2-TR).